The following is a 361-amino-acid chain: Homocitrate synthase (361 aa).

In terms of domain architecture, Pyruvate carboxyltransferase spans 1–249 (MILDSTLREG…VKKYRLDKLY (249 aa)). Residue Arg8 participates in 2-oxoglutarate binding. Glu9 contributes to the Mg(2+) binding site. 2-oxoglutarate-binding residues include His68, Arg128, and Thr162. Positions 188 and 190 each coordinate Mg(2+). His282 functions as the Proton acceptor in the catalytic mechanism.

It belongs to the alpha-IPM synthase/homocitrate synthase family. Homocitrate synthase LYS20/LYS21 subfamily. The cofactor is Mg(2+). It depends on Mn(2+) as a cofactor.

It catalyses the reaction acetyl-CoA + 2-oxoglutarate + H2O = (2R)-homocitrate + CoA + H(+). It functions in the pathway amino-acid biosynthesis; L-lysine biosynthesis via AAA pathway; L-alpha-aminoadipate from 2-oxoglutarate: step 1/5. Its function is as follows. Catalyzes the aldol-type condensation of 2-oxoglutarate with acetyl-CoA to yield homocitrate. Carries out the first step of the alpha-aminoadipate (AAA) lysine biosynthesis pathway. This Pyrococcus horikoshii (strain ATCC 700860 / DSM 12428 / JCM 9974 / NBRC 100139 / OT-3) protein is Homocitrate synthase.